Consider the following 245-residue polypeptide: 1-(5-phosphoribosyl)-5-[(5-phosphoribosylamino)methylideneamino] imidazole-4-carboxamide isomerase (245 aa).

Asp-8 functions as the Proton acceptor in the catalytic mechanism. The active-site Proton donor is the Asp-131.

It belongs to the HisA/HisF family.

The protein localises to the cytoplasm. It catalyses the reaction 1-(5-phospho-beta-D-ribosyl)-5-[(5-phospho-beta-D-ribosylamino)methylideneamino]imidazole-4-carboxamide = 5-[(5-phospho-1-deoxy-D-ribulos-1-ylimino)methylamino]-1-(5-phospho-beta-D-ribosyl)imidazole-4-carboxamide. It participates in amino-acid biosynthesis; L-histidine biosynthesis; L-histidine from 5-phospho-alpha-D-ribose 1-diphosphate: step 4/9. The sequence is that of 1-(5-phosphoribosyl)-5-[(5-phosphoribosylamino)methylideneamino] imidazole-4-carboxamide isomerase from Neisseria gonorrhoeae (strain ATCC 700825 / FA 1090).